A 77-amino-acid chain; its full sequence is Acyl carrier protein (77 aa).

The Carrier domain occupies 2–77; sequence ADALERVTKI…DAVNYINSKQ (76 aa). O-(pantetheine 4'-phosphoryl)serine is present on Ser37.

This sequence belongs to the acyl carrier protein (ACP) family. In terms of processing, 4'-phosphopantetheine is transferred from CoA to a specific serine of apo-ACP by AcpS. This modification is essential for activity because fatty acids are bound in thioester linkage to the sulfhydryl of the prosthetic group.

It localises to the cytoplasm. It functions in the pathway lipid metabolism; fatty acid biosynthesis. Functionally, carrier of the growing fatty acid chain in fatty acid biosynthesis. This Bacillus licheniformis (strain ATCC 14580 / DSM 13 / JCM 2505 / CCUG 7422 / NBRC 12200 / NCIMB 9375 / NCTC 10341 / NRRL NRS-1264 / Gibson 46) protein is Acyl carrier protein.